Reading from the N-terminus, the 75-residue chain is Small ribosomal subunit protein eS28 (75 aa).

This sequence belongs to the eukaryotic ribosomal protein eS28 family.

This is Small ribosomal subunit protein eS28 from Methanococcus aeolicus (strain ATCC BAA-1280 / DSM 17508 / OCM 812 / Nankai-3).